The primary structure comprises 320 residues: Stress-induced-phosphoprotein 1 (320 aa).

TPR repeat units lie at residues 5–38 (AIAE…DPSN), 40–72 (TFYN…GRET), 80–113 (AKAM…FRDP), 140–173 (AQEE…DPEN), 175–207 (ILYS…DSKF), and 208–241 (IKGY…DPSN). Residues 241-269 (NEEAREGVRNCLRSNDEDPEKAKERSLAD) are disordered. The span at 242–269 (EEAREGVRNCLRSNDEDPEKAKERSLAD) shows a compositional bias: basic and acidic residues. The region spanning 269–308 (DPEVQEILRDPGMRMILEQMSNDPGAVREHLKNPEIFQKL) is the STI1 domain.

Forms a complex with hsp-1/hsp70 and daf-21/hsp90. Interacts with daf-21/hsp90 (via the C-terminal MEEVD pentapeptide). In terms of tissue distribution, expressed ubiquitously in the whole body. Detected predominantly in the pharyngeal muscles, vulva epithelial cells, striated body-wall muscles, spermathecae and intestinal cell ring. Also observed in the tail regions of hermaphrodite and in the sensory rays and spicules of males.

Its subcellular location is the cytoplasm. Its function is as follows. Plays a role in gonad development. Up-regulates longevity and thermotolerance. Binds daf-21/hsp90 and inhibits its ATPase activity. The chain is Stress-induced-phosphoprotein 1 from Caenorhabditis elegans.